Here is a 258-residue protein sequence, read N- to C-terminus: Gene 3 protein (258 aa).

Polar residues predominate over residues 163-176 (STENLLGQTQSSTH). The segment at 163–258 (STENLLGQTQ…TRRYPPSFFK (96 aa)) is disordered. The segment covering 214 to 240 (SIREETVSGMARAREECNSPSEHDRLT) has biased composition (basic and acidic residues).

The sequence is that of Gene 3 protein from Equine herpesvirus 1 (strain Kentucky A) (EHV-1).